Reading from the N-terminus, the 586-residue chain is GRB2-associated-binding protein 3 (586 aa).

Positions 5-117 (DAVCTGWLVK…WVHSISQVCN (113 aa)) constitute a PH domain. Disordered regions lie at residues 149 to 171 (AHAA…TEET) and 281 to 335 (SSTI…KKPE). Polar residues predominate over residues 283 to 292 (TIQVDKNQGS). The span at 316 to 326 (HLSERRQEEWS) shows a compositional bias: basic and acidic residues. Residue S344 is modified to Phosphoserine. The tract at residues 401–453 (GASGLGPHCSPDDYIPMNSGSISSPLPELPANLEPPPVNRDLKPQRKSRPPPL) is disordered. Residue S482 is modified to Phosphoserine.

It belongs to the GAB family. Interacts with PIK3R/p85, SHP2 and GRAP2/MONA. May interact with Grb2. Phosphorylated on tyrosine residue(s) after macrophage colony-stimulating factor (M-CSF) receptor stimulation.

In Homo sapiens (Human), this protein is GRB2-associated-binding protein 3 (GAB3).